A 75-amino-acid polypeptide reads, in one-letter code: ATP synthase subunit c (75 aa).

Transmembrane regions (helical) follow at residues 8-28 (FLGIGLSVVGMLGAAIGVSNI) and 54-74 (AALTEAMGLFSFVLALLLIFV).

The protein belongs to the ATPase C chain family. In terms of assembly, F-type ATPases have 2 components, F(1) - the catalytic core - and F(0) - the membrane proton channel. F(1) has five subunits: alpha(3), beta(3), gamma(1), delta(1), epsilon(1). F(0) has three main subunits: a(1), b(2) and c(10-14). The alpha and beta chains form an alternating ring which encloses part of the gamma chain. F(1) is attached to F(0) by a central stalk formed by the gamma and epsilon chains, while a peripheral stalk is formed by the delta and b chains.

The protein resides in the cell inner membrane. F(1)F(0) ATP synthase produces ATP from ADP in the presence of a proton or sodium gradient. F-type ATPases consist of two structural domains, F(1) containing the extramembraneous catalytic core and F(0) containing the membrane proton channel, linked together by a central stalk and a peripheral stalk. During catalysis, ATP synthesis in the catalytic domain of F(1) is coupled via a rotary mechanism of the central stalk subunits to proton translocation. In terms of biological role, key component of the F(0) channel; it plays a direct role in translocation across the membrane. A homomeric c-ring of between 10-14 subunits forms the central stalk rotor element with the F(1) delta and epsilon subunits. The sequence is that of ATP synthase subunit c from Neorickettsia sennetsu (strain ATCC VR-367 / Miyayama) (Ehrlichia sennetsu).